The primary structure comprises 1020 residues: Sodium/potassium-transporting ATPase subunit alpha-2 (1020 aa).

The propeptide occupies 1-5 (MGRGA). The tract at residues 1-31 (MGRGAGREYSPAATTAENGGGKKKQKEKELD) is disordered. Over 6-85 (GREYSPAATT…NALTPPPTTP (80 aa)) the chain is Cytoplasmic. At serine 10 the chain carries Phosphoserine. The interaction with phosphoinositide-3 kinase stretch occupies residues 80–82 (PPP). A helical transmembrane segment spans residues 86–106 (EWVKFCRQLFGGFSILLWIGA). Topologically, residues 107-129 (LLCFLAYGILAAMEDEPSNDNLY) are extracellular. Residues 130–150 (LGIVLAAVVIVTGCFSYYQEA) form a helical membrane-spanning segment. Residues 151–286 (KSSKIMDSFK…VGQTPIAMEI (136 aa)) are Cytoplasmic-facing. The segment covering 212-227 (DNSSLTGESEPQTRSP) has biased composition (polar residues). The tract at residues 212-231 (DNSSLTGESEPQTRSPEFTH) is disordered. The helical transmembrane segment at 287-306 (EHFIQLITGVAVFLGVSFFV) threads the bilayer. The Extracellular segment spans residues 307–318 (LSLILGYSWLEA). The helical transmembrane segment at 319 to 336 (VIFLIGIIVANVPEGLLA) threads the bilayer. At 337–769 (TVTVCLTLTA…EEGRLIFDNL (433 aa)) the chain is on the cytoplasmic side. The active-site 4-aspartylphosphate intermediate is the aspartate 374. Phosphoserine is present on residues serine 439, serine 450, serine 496, and serine 559. Threonine 570 bears the Phosphothreonine mark. Phosphoserine is present on residues serine 587 and serine 672. Residues aspartate 714 and aspartate 718 each contribute to the Mg(2+) site. The chain crosses the membrane as a helical span at residues 770–789 (KKSIAYTLTSNIPEITPFLL). Residues 790–799 (FIIANIPLPL) are Extracellular-facing. The helical transmembrane segment at 800-820 (GTVTILCIDLGTDMVPAISLA) threads the bilayer. Topologically, residues 821–840 (YEAAESDIMKRQPRNSQTDK) are cytoplasmic. The residue at position 826 (serine 826) is a Phosphoserine. Residues 841-863 (LVNERLISMAYGQIGMIQALGGF) traverse the membrane as a helical segment. At 864 to 915 (FTYFVILAENGFLPSRLLGIRLDWDDRTTNDLEDSYGQEWTYEQRKVVEFTC) the chain is on the extracellular side. The helical transmembrane segment at 916-935 (HTAFFASIVVVQWADLIICK) threads the bilayer. Topologically, residues 936–948 (TRRNSVFQQGMKN) are cytoplasmic. Serine 940 is subject to Phosphoserine; by PKA. Residues 949 to 967 (KILIFGLLEETALAAFLSY) form a helical membrane-spanning segment. Topologically, residues 968-982 (CPGMGVALRMYPLKV) are extracellular. Residues 983–1003 (TWWFCAFPYSLLIFIYDEVRK) form a helical membrane-spanning segment. At 1004–1020 (LILRRYPGGWVEKETYY) the chain is on the cytoplasmic side.

It belongs to the cation transport ATPase (P-type) (TC 3.A.3) family. Type IIC subfamily. The sodium/potassium-transporting ATPase is composed of a catalytic alpha subunit, an auxiliary non-catalytic beta subunit and an additional regulatory subunit. Interacts with regulatory subunit FXYD1.

The protein resides in the membrane. It localises to the cell membrane. The catalysed reaction is K(+)(out) + Na(+)(in) + ATP + H2O = K(+)(in) + Na(+)(out) + ADP + phosphate + H(+). In terms of biological role, this is the catalytic component of the active enzyme, which catalyzes the hydrolysis of ATP coupled with the exchange of sodium and potassium ions across the plasma membrane. This action creates the electrochemical gradient of sodium and potassium ions, providing the energy for active transport of various nutrients. The protein is Sodium/potassium-transporting ATPase subunit alpha-2 (Atp1a2) of Mus musculus (Mouse).